The chain runs to 160 residues: Sperm protein associated with the nucleus on the X chromosome N2 (160 aa).

Disordered regions lie at residues 1-48 (MEKP…TSEY) and 64-160 (SNQL…GEED). The segment covering 10-35 (GEKRKSPCDSNNRNDEMQETPNRDLA) has biased composition (basic and acidic residues). Positions 64–79 (SNQLENDQSQENSVNP) are enriched in polar residues. Positions 81–97 (QEEEDEGSSQEDEDLDS) are enriched in acidic residues. Positions 136 to 148 (SSERSSQEEKDPD) are enriched in basic and acidic residues.

The protein belongs to the SPAN-X family.

This Pongo pygmaeus (Bornean orangutan) protein is Sperm protein associated with the nucleus on the X chromosome N2 (SPANXN2).